The sequence spans 267 residues: Octanoyltransferase (267 aa).

Residues 1–30 (MPTGKLRQKPPYAAIMTNSPVTPSTETQQP) are disordered. Residues 16 to 28 (MTNSPVTPSTETQ) show a composition bias toward polar residues. The BPL/LPL catalytic domain occupies 77-265 (GTASELVWLV…AFESVFGPRQ (189 aa)). Residues 116-123 (RGGEYTYH), 196-198 (AIG), and 209-211 (GIA) contribute to the substrate site. C227 functions as the Acyl-thioester intermediate in the catalytic mechanism.

It belongs to the LipB family.

It is found in the cytoplasm. The catalysed reaction is octanoyl-[ACP] + L-lysyl-[protein] = N(6)-octanoyl-L-lysyl-[protein] + holo-[ACP] + H(+). It participates in protein modification; protein lipoylation via endogenous pathway; protein N(6)-(lipoyl)lysine from octanoyl-[acyl-carrier-protein]: step 1/2. Catalyzes the transfer of endogenously produced octanoic acid from octanoyl-acyl-carrier-protein onto the lipoyl domains of lipoate-dependent enzymes. Lipoyl-ACP can also act as a substrate although octanoyl-ACP is likely to be the physiological substrate. This is Octanoyltransferase from Brucella abortus biovar 1 (strain 9-941).